Reading from the N-terminus, the 468-residue chain is uncharacterized protein (468 aa).

The N-terminal stretch at 1-19 (MRVLSVLLVALTVAGSAYS) is a signal peptide. N86 and N334 each carry an N-linked (GlcNAc...) asparagine glycan. The segment at 401–421 (NPSTNLPETSPPTEQPTAPPA) is disordered. Residues 409–421 (TSPPTEQPTAPPA) are compositionally biased toward pro residues. A glycan (N-linked (GlcNAc...) asparagine) is linked at N435. A lipid anchor (GPI-like-anchor amidated asparagine) is attached at N444. The propeptide at 445–468 (SASSIEMSKLVVAILSLFILAFFH) is removed in mature form.

The protein resides in the cell membrane. This is an uncharacterized protein from Dictyostelium discoideum (Social amoeba).